The following is a 421-amino-acid chain: Ankyrin repeat and SOCS box protein 6 (421 aa).

6 ANK repeats span residues 67–97, 102–131, 136–166, 170–205, 226–255, and 260–289; these read EGVS…NLNF, TYYT…DVNR, HESS…DVNA, HGKT…DVKA, GGDK…DPSE, and ESLT…AYNC. One can recognise an SOCS box domain in the interval 360-415; the sequence is ALHFSLRQLESYPPPLKHLCRVAIRLYLQPWPVDVKVKALPLPDRLKWYLLSEHSG.

The protein belongs to the ankyrin SOCS box (ASB) family. As to quaternary structure, binds APS. Identified in a complex with ELOB and ELOC. Interacts with CUL5 and RNF7. Interacts with SQSTM1. In terms of processing, ubiquitinated by RNF41; leading to proteasomal degradation.

It is found in the cytoplasm. It participates in protein modification; protein ubiquitination. Its function is as follows. Probable substrate-recognition component of a SCF-like ECS (Elongin-Cullin-SOCS-box protein) E3 ubiquitin-protein ligase complex which mediates the ubiquitination and subsequent proteasomal degradation of target proteins. May play a role in the regulation of cell proliferation and autophagy by promoting the ubiquitination and degradation of SQSTM1. This is Ankyrin repeat and SOCS box protein 6 (ASB6) from Homo sapiens (Human).